The sequence spans 79 residues: Small ribosomal subunit protein bS18 (79 aa).

The protein belongs to the bacterial ribosomal protein bS18 family. Part of the 30S ribosomal subunit. Forms a tight heterodimer with protein bS6.

In terms of biological role, binds as a heterodimer with protein bS6 to the central domain of the 16S rRNA, where it helps stabilize the platform of the 30S subunit. This Bradyrhizobium diazoefficiens (strain JCM 10833 / BCRC 13528 / IAM 13628 / NBRC 14792 / USDA 110) protein is Small ribosomal subunit protein bS18.